The sequence spans 121 residues: Large ribosomal subunit protein bL12 (121 aa).

It belongs to the bacterial ribosomal protein bL12 family. Homodimer. Part of the ribosomal stalk of the 50S ribosomal subunit. Forms a multimeric L10(L12)X complex, where L10 forms an elongated spine to which 2 to 4 L12 dimers bind in a sequential fashion. Binds GTP-bound translation factors.

Functionally, forms part of the ribosomal stalk which helps the ribosome interact with GTP-bound translation factors. Is thus essential for accurate translation. This is Large ribosomal subunit protein bL12 from Ureaplasma parvum serovar 3 (strain ATCC 27815 / 27 / NCTC 11736).